The sequence spans 176 residues: Nucleoside triphosphate/diphosphate phosphatase (176 aa).

Catalysis depends on Arg23, which acts as the Proton donor. Mg(2+) contacts are provided by Asn87, Asp103, Asp105, Asp107, Asp120, and Glu123.

It belongs to the Ntdp family. Mg(2+) serves as cofactor.

The enzyme catalyses a ribonucleoside 5'-triphosphate + H2O = a ribonucleoside 5'-diphosphate + phosphate + H(+). It carries out the reaction a ribonucleoside 5'-diphosphate + H2O = a ribonucleoside 5'-phosphate + phosphate + H(+). Has nucleoside phosphatase activity towards nucleoside triphosphates and nucleoside diphosphates. This is Nucleoside triphosphate/diphosphate phosphatase (yjjG) from Lactococcus lactis subsp. lactis (strain IL1403) (Streptococcus lactis).